The sequence spans 652 residues: Protein high chlorophyll fluorescent 107 (652 aa).

Disordered stretches follow at residues 1–21 (MHFFFVPNSSSSSPSPANTSS) and 78–121 (VFSP…EGKK). Residues 1 to 68 (MHFFFVPNSS…TFSSKNTYLY (68 aa)) constitute a chloroplast transit peptide. A compositionally biased stretch (basic and acidic residues) spans 105–121 (PLLENSDKESSEEEGKK). 12 TPR repeats span residues 168–201 (LDLSLYKAKVLARNFRYKDAEKILEKCIAYWPED), 202–235 (GRPYVALGKILSKQSKLAEARILYEKGCQSTQGE), 237–270 (SYIWQCWAVLENRLGNVRRARELFDAATVADKKH), 271–304 (VAAWHGWANLEIKQGNISKARNLLAKGLKFCGRN), 305–338 (EYIYQTLALLEAKAGRYEQARYLFKQATICNSRS), 339–372 (CASWLAWAQLEIQQERYPAARKLFEKAVQASPKN), 374–406 (FAWHVWGVFEAGVGNVERGRKLLKIGHALNPRD), 407–440 (PVLLQSLGLLEYKHSSANLARALLRRASELDPRH), 441–474 (QPVWIAWGWMEWKEGNTTTARELYQRALSIDANT), 478–511 (SRCLQAWGVLEQRAGNLSAARRLFRSSLNINSQS), 543–576 (TEVVDDASWVTGFLDIIDPALDTVKRLLNFGQNN), and 598–631 (QQPESSAGREDIETGSGFNLDVFLRSKLSLDPLK). The segment at 585–610 (LRNMNRTKDSQSNQQPESSAGREDIE) is disordered.

As to quaternary structure, may form homomultimers. Part of a multi-subunit complex in the range of 60-190 and 600-800 kDa in chloroplast membranes.

The protein localises to the plastid. The protein resides in the chloroplast. Its subcellular location is the chloroplast membrane. It localises to the chloroplast stroma. Involved, directly or indirectly, in the processing of chloroplast encoded mRNAs. Exhibits sequence-specific RNA binding and RNA remodeling activities, probably leading to the activation of translation of the target gene cluster psbB-psbT-psbH-petB-petD. Blocks 5'-3' and 3'-5' exoribonucleases (e.g. polynucleotide phosphorylase (PNPase), RNase R) in vitro. Necessary for intercistronic RNA processing of the psbH 5' untranslated region or the stabilization of 5' processed psbH RNAs. Also required for the synthesis of psbB. The chain is Protein high chlorophyll fluorescent 107 from Arabidopsis thaliana (Mouse-ear cress).